We begin with the raw amino-acid sequence, 105 residues long: Large ribosomal subunit protein uL24 (105 aa).

Belongs to the universal ribosomal protein uL24 family. In terms of assembly, part of the 50S ribosomal subunit.

In terms of biological role, one of two assembly initiator proteins, it binds directly to the 5'-end of the 23S rRNA, where it nucleates assembly of the 50S subunit. Its function is as follows. One of the proteins that surrounds the polypeptide exit tunnel on the outside of the subunit. The chain is Large ribosomal subunit protein uL24 from Psychrobacter cryohalolentis (strain ATCC BAA-1226 / DSM 17306 / VKM B-2378 / K5).